The primary structure comprises 771 residues: Protein lin-54 homolog (771 aa).

Disordered stretches follow at residues 21–44 (AMDE…SAQV) and 68–105 (TNAK…IPSL). Residues 72-92 (STTSSTTQLLLTPSSSSSTTT) are compositionally biased toward low complexity. Phosphoserine occurs at positions 288, 292, and 308. The 114-residue stretch at 544-657 (PRKPCNCTRS…KCMGCKNFEE (114 aa)) folds into the CRC domain. Residues 546–559 (KPCNCTRSQCLKLY) are DNA-binding. Zn(2+) contacts are provided by C548, C550, C555, C560, C562, C569, C572, C574, and C577. Positions 606 to 619 (IGKGKEGESDRRHS) are linker. 9 residues coordinate Zn(2+): C622, C624, C629, C634, C636, C643, C647, C649, and C652. The tract at residues 622 to 635 (CNCKKSGCLKNYCE) is DNA-binding.

Belongs to the lin-54 family. As to quaternary structure, component of the DREAM complex.

The protein localises to the nucleus. Its function is as follows. Component of the DREAM complex, a multiprotein complex that can both act as a transcription activator or repressor depending on the context. Specifically recognizes the consensus motif 5'-TTYRAA-3' in target DNA. This is Protein lin-54 homolog (lin54) from Danio rerio (Zebrafish).